A 357-amino-acid polypeptide reads, in one-letter code: MTTHKQQIQDVYNCLGTVSHLLKESHTGEEIDDFEDNFYSQQMQKASANGSMFPNTLHQVSNFLEKLSVQAYNVQPLLSSAKYEILSNVRNLKSESDGKINRYEHESALGLKKLFNSPISSSTVNHDQPAEQPSDKSTDDSTGYPPWAIEAFNSESNIKNVGPPNFPMGQLGEILIGADPVISPRRQFPPPHYLEQLQRDHPPLFHLNAFDSPPPSPGNELEDYDFNMQIDLNGVIPADVQLLDEFQQENDKTESNNTICQLDLCSSFQYLLKTTTENAQDKQNVLKEILHHSDLVLHHAADQCPFVLKEDMIELSTCIGLIYESLERNTDFESYLKVRSVVQYLVSKVRSALKKYI.

The segment at Ser120–Pro145 is disordered.

This is an uncharacterized protein from Caenorhabditis elegans.